The following is a 286-amino-acid chain: 1D-myo-inositol 2-acetamido-2-deoxy-alpha-D-glucopyranoside deacetylase (286 aa).

His12, Asp15, and His147 together coordinate Zn(2+).

The protein belongs to the MshB deacetylase family. Zn(2+) serves as cofactor.

The catalysed reaction is 1D-myo-inositol 2-acetamido-2-deoxy-alpha-D-glucopyranoside + H2O = 1D-myo-inositol 2-amino-2-deoxy-alpha-D-glucopyranoside + acetate. Its function is as follows. Catalyzes the deacetylation of 1D-myo-inositol 2-acetamido-2-deoxy-alpha-D-glucopyranoside (GlcNAc-Ins) in the mycothiol biosynthesis pathway. The chain is 1D-myo-inositol 2-acetamido-2-deoxy-alpha-D-glucopyranoside deacetylase from Thermobifida fusca (strain YX).